The chain runs to 69 residues: MAHITVDDSENLEKAIKRFKRQVEKEGIIREWKKKEFYEKPSTLLNRKKKALRRKLMKKGRKVSDSRLY.

This sequence belongs to the bacterial ribosomal protein bS21 family.

The protein is Small ribosomal subunit protein bS21 (rpsU) of Treponema pallidum (strain Nichols).